Reading from the N-terminus, the 100-residue chain is MELTPRDKDKLLLFTAALLAERRKAKGLKLNYPEAVALISAEIMEGAREGRTVAELMSAGTEILAREDVMDGVADMVHEVQVEATFPDGTKLVTVHNPIV.

The protein belongs to the urease gamma subunit family. As to quaternary structure, heterotrimer of UreA (gamma), UreB (beta) and UreC (alpha) subunits. Three heterotrimers associate to form the active enzyme.

It localises to the cytoplasm. The catalysed reaction is urea + 2 H2O + H(+) = hydrogencarbonate + 2 NH4(+). The protein operates within nitrogen metabolism; urea degradation; CO(2) and NH(3) from urea (urease route): step 1/1. The chain is Urease subunit gamma from Marinobacter nauticus (strain ATCC 700491 / DSM 11845 / VT8) (Marinobacter aquaeolei).